A 68-amino-acid polypeptide reads, in one-letter code: Large ribosomal subunit protein uL29 (68 aa).

Belongs to the universal ribosomal protein uL29 family.

The chain is Large ribosomal subunit protein uL29 from Streptococcus agalactiae serotype Ia (strain ATCC 27591 / A909 / CDC SS700).